The sequence spans 223 residues: Peptidyl-tRNA hydrolase (223 aa).

Tyr16 contacts tRNA. The active-site Proton acceptor is the His21. TRNA is bound by residues Phe67, Asn69, and Asn113.

Belongs to the PTH family. In terms of assembly, monomer.

Its subcellular location is the cytoplasm. The catalysed reaction is an N-acyl-L-alpha-aminoacyl-tRNA + H2O = an N-acyl-L-amino acid + a tRNA + H(+). Hydrolyzes ribosome-free peptidyl-tRNAs (with 1 or more amino acids incorporated), which drop off the ribosome during protein synthesis, or as a result of ribosome stalling. Functionally, catalyzes the release of premature peptidyl moieties from peptidyl-tRNA molecules trapped in stalled 50S ribosomal subunits, and thus maintains levels of free tRNAs and 50S ribosomes. The protein is Peptidyl-tRNA hydrolase of Helicobacter hepaticus (strain ATCC 51449 / 3B1).